The sequence spans 314 residues: Putative methylthioribose-1-phosphate isomerase (314 aa).

Substrate is bound by residues 45-47, Arg-79, and Gln-177; that span reads RGA. The active-site Proton donor is the Asp-218. Residue 227–228 participates in substrate binding; sequence NK.

Belongs to the eIF-2B alpha/beta/delta subunits family. MtnA subfamily.

It catalyses the reaction 5-(methylsulfanyl)-alpha-D-ribose 1-phosphate = 5-(methylsulfanyl)-D-ribulose 1-phosphate. In terms of biological role, catalyzes the interconversion of methylthioribose-1-phosphate (MTR-1-P) into methylthioribulose-1-phosphate (MTRu-1-P). This Methanosphaera stadtmanae (strain ATCC 43021 / DSM 3091 / JCM 11832 / MCB-3) protein is Putative methylthioribose-1-phosphate isomerase.